Consider the following 165-residue polypeptide: Austinoid biosynthesis cluster protein J (165 aa).

It belongs to the trt14 isomerase family. Homodimer.

Its pathway is secondary metabolite biosynthesis; terpenoid biosynthesis. Part of the gene cluster that mediates the biosynthesis of calidodehydroaustin, a fungal meroterpenoid. The first step of the pathway is the synthesis of 3,5-dimethylorsellinic acid by the polyketide synthase ausA. 3,5-dimethylorsellinic acid is then prenylated by the polyprenyl transferase ausN. Further epoxidation by the FAD-dependent monooxygenase ausM and cyclization by the probable terpene cyclase ausL lead to the formation of protoaustinoid A. Protoaustinoid A is then oxidized to spiro-lactone preaustinoid A3 by the combined action of the FAD-binding monooxygenases ausB and ausC, and the dioxygenase ausE. Acid-catalyzed keto-rearrangement and ring contraction of the tetraketide portion of preaustinoid A3 by ausJ lead to the formation of preaustinoid A4. The aldo-keto reductase ausK, with the help of ausH, is involved in the next step by transforming preaustinoid A4 into isoaustinone which is in turn hydroxylated by the P450 monooxygenase ausI to form austinolide. The cytochrome P450 monooxygenase ausG modifies austinolide to austinol. Austinol is further acetylated to austin by the O-acetyltransferase ausP, which spontaneously changes to dehydroaustin. The cytochrome P450 monooxygenase ausR then converts dehydroaustin is into 7-dehydrodehydroaustin. The hydroxylation catalyzed by ausR permits the O-acetyltransferase ausQ to add an additional acetyl group to the molecule, leading to the formation of acetoxydehydroaustin. The short chain dehydrogenase ausT catalyzes the reduction of the double bond present between carbon atoms 1 and 2 to convert 7-dehydrodehydroaustin into 1,2-dihydro-7-hydroxydehydroaustin. AusQ catalyzes not only an acetylation reaction but also the addition of the PKS ausV diketide product to 1,2-dihydro-7-hydroxydehydroaustin, forming precalidodehydroaustin. Finally, the iron/alpha-ketoglutarate-dependent dioxygenase converts precalidodehydroaustin into calidodehydroaustin. The sequence is that of Austinoid biosynthesis cluster protein J from Aspergillus calidoustus.